The primary structure comprises 212 residues: Inactive ribonuclease-like protein 10 (212 aa).

The first 24 residues, 1–24 (MKVTLVHLLFMMLLLLLGLGVGLG), serve as a signal peptide directing secretion. Residues Asn129 and Asn204 are each glycosylated (N-linked (GlcNAc...) asparagine).

It belongs to the pancreatic ribonuclease family. In terms of processing, the N-terminus is blocked. Glycosylated. Male-specific expression in proximal caput of the epididymis.

It is found in the secreted. In terms of biological role, secreted proximal epididymal protein required for post-testicular sperm maturation and male fertility. May be involved in sperm adhesion to the egg zona pellucida. Does not have ribonuclease activity. In Rattus norvegicus (Rat), this protein is Inactive ribonuclease-like protein 10 (Rnase10).